A 1902-amino-acid polypeptide reads, in one-letter code: Plexin-B3 (1902 aa).

An N-terminal signal peptide occupies residues 1–34 (MLTDFLQAPVMAPWSPFSLHLLLLFLLLLPLTRA). The Sema domain occupies 35–461 (HRFSVPNASF…TAQQVDRILV (427 aa)). Over 35-1245 (HRFSVPNASF…MISTFPVEAQ (1211 aa)) the chain is Extracellular. The N-linked (GlcNAc...) asparagine glycan is linked to asparagine 41. 2 disulfide bridges follow: cysteine 88/cysteine 97 and cysteine 122/cysteine 130. N-linked (GlcNAc...) asparagine glycosylation is present at asparagine 221. 3 cysteine pairs are disulfide-bonded: cysteine 257–cysteine 360, cysteine 273–cysteine 305, and cysteine 323–cysteine 347. A disordered region spans residues 353 to 372 (DSPESYPCGDEHTPSPIAGR). Residues asparagine 416 and asparagine 469 are each glycosylated (N-linked (GlcNAc...) asparagine). The PSI 1 domain maps to 463-515 (ACPQFPNCTTCLQARDPLCGWCILQGRCTRRAECGRAVQPNQWLWSYEDNHCL). Cystine bridges form between cysteine 464/cysteine 481, cysteine 470/cysteine 514, cysteine 473/cysteine 490, cysteine 484/cysteine 496, and cysteine 551/cysteine 569. 2 consecutive PSI domains span residues 609–671 (DCSA…EACP) and 776–822 (DCAM…QLCP). Asparagine 791, asparagine 889, asparagine 946, asparagine 1090, and asparagine 1207 each carry an N-linked (GlcNAc...) asparagine glycan. IPT/TIG domains are found at residues 824–913 (PSID…HFTY), 915–1001 (DPVL…FRYT), and 1003–1134 (NPQL…FLYQ). The chain crosses the membrane as a helical span at residues 1246 to 1266 (VGLGMGAAMLIAAVLLLTLMY). Over 1267–1902 (RHKSKQALRD…ALVEYKVTDL (636 aa)) the chain is Cytoplasmic.

Belongs to the plexin family. As to quaternary structure, binds MET and MST1R. Interacts with RIT2/RIN. Interacts (via cytoplasmic domain) with FSCN1 and RAC1. May form homodimers (via Sema domain). Interacts (via cytoplasmic domain) with ARHGDIA. As to expression, expressed in glioma cells (at protein level). Expressed in glioma cells and oligodendrocyte precursor cells.

It localises to the cell membrane. In terms of biological role, receptor for SEMA5A that plays a role in axon guidance, invasive growth and cell migration. Stimulates neurite outgrowth and mediates Ca(2+)/Mg(2+)-dependent cell aggregation. In glioma cells, SEMA5A stimulation of PLXNB3 results in the disassembly of F-actin stress fibers, disruption of focal adhesions and cellular collapse as well as inhibition of cell migration and invasion through ARHGDIA-mediated inactivation of RAC1. The chain is Plexin-B3 (Plxnb3) from Rattus norvegicus (Rat).